A 149-amino-acid chain; its full sequence is NPC intracellular cholesterol transporter 2 (149 aa).

The signal sequence occupies residues 1-19; that stretch reads MRFLTVAFLFLALSASALA. 3 disulfide bridges follow: Cys-27–Cys-140, Cys-42–Cys-47, and Cys-93–Cys-99. Asn-58 carries an N-linked (GlcNAc...) asparagine glycan. N6-acetyllysine is present on Lys-116.

This sequence belongs to the NPC2 family. As to quaternary structure, interacts with NPC1 (via the second lumenal domain) in a cholestrol-dependent manner. Interacts with NUS1/NgBR, the interaction stabilizes NCP2 and regulates cholesterol trafficking. Interacts with DHDDS. Interacts with NEDD4L (via C2 domain). Interacts with NPC1L1. As to expression, expressed in kidney, spleen, liver and mammary gland, but not in testis.

The protein resides in the secreted. It is found in the endoplasmic reticulum. Its subcellular location is the lysosome. It carries out the reaction cholesterol(in) = cholesterol(out). Its function is as follows. Intracellular cholesterol transporter which acts in concert with NPC1 and plays an important role in the egress of cholesterol from the lysosomal compartment. Unesterified cholesterol that has been released from LDLs in the lumen of the late endosomes/lysosomes is transferred by NPC2 to the cholesterol-binding pocket in the N-terminal domain of NPC1. May bind and mobilize cholesterol that is associated with membranes. NPC2 binds cholesterol with a 1:1 stoichiometry. Can bind a variety of sterols, including lathosterol, desmosterol and the plant sterols stigmasterol and beta-sitosterol. The secreted form of NCP2 regulates biliary cholesterol secretion via stimulation of ABCG5/ABCG8-mediated cholesterol transport. The protein is NPC intracellular cholesterol transporter 2 of Bos taurus (Bovine).